The sequence spans 536 residues: Mannuronan C5-epimerase (536 aa).

Residues 1–36 (MNSHASNGRSRNWPHALLESALLTSALLMASSVALA) form the signal peptide. PbH1 repeat units follow at residues 298–320 (TRDF…DPHD), 322–345 (SHGL…IISR), 347–369 (VDNS…VLDR), 371–393 (SVGN…TLYE), and 394–416 (SGNN…RVRN). Catalysis depends on His-319, which acts as the Proton acceptor.

This sequence belongs to the D-mannuronate C5-epimerase family.

It is found in the periplasm. It catalyses the reaction [(1-&gt;4)-beta-D-mannuronosyl](n) = [alginate](n). It functions in the pathway glycan biosynthesis; alginate biosynthesis. Its function is as follows. Catalyzes the epimerization of beta-D-mannuronate to alpha-L-guluronate during the synthesis of the linear polysaccharide alginate. In addition, is part of a periplasmic protein complex that protects alginate from degradation by AlgL by channeling the newly formed alginate polymer through a scaffold that transfers the alginate polymer through the periplasmic space to the outer membrane secretin AlgE. This Pseudomonas syringae pv. tomato (strain ATCC BAA-871 / DC3000) protein is Mannuronan C5-epimerase (algG).